The sequence spans 856 residues: Alginate lyase 7 (856 aa).

PbH1 repeat units lie at residues 133-155 (DYNV…DPHE), 157-179 (TINL…VADF), 180-202 (QIGA…NIVT), 204-226 (SHDI…VVQR), 234-256 (VYNV…LIKM), 257-279 (STDV…RVQG), 280-304 (VEDV…EVIV), and 320-342 (TQNV…GIQE). 9 Hemolysin-type calcium-binding repeats span residues 387 to 402 (GSTG…IADL), 404 to 421 (VGGS…NDVL), 422 to 439 (EGGA…ADIF), 538 to 549 (GTEGDDSLTGNA), 554 to 563 (LDGGSGNDSL), 565 to 581 (GGLG…DDIL), 582 to 599 (NGGL…ADIF), 715 to 731 (GGAG…DDIL), and 733 to 749 (GGSE…ADVF).

This sequence belongs to the D-mannuronate C5-epimerase family. Ca(2+) serves as cofactor.

It is found in the secreted. The enzyme catalyses Eliminative cleavage of alginate to give oligosaccharides with 4-deoxy-alpha-L-erythro-hex-4-enuronosyl groups at their non-reducing ends and beta-D-mannuronate at their reducing end.. It carries out the reaction [(1-&gt;4)-beta-D-mannuronosyl](n) = [alginate](n). Its pathway is glycan biosynthesis; alginate biosynthesis. Its activity is regulated as follows. Inhibited by zinc. In terms of biological role, converts beta-D-mannuronic acid (M) to alpha-L-guluronic acid (G). Has both epimerase and lyase activities. Contributes to abortive encystment by degrading the coat from inside the cyst. Important for cyst germination. In Azotobacter vinelandii, this protein is Alginate lyase 7.